Reading from the N-terminus, the 204-residue chain is Guanylate kinase (204 aa).

The Guanylate kinase-like domain occupies 1-182 (MLYIISAPSG…ALSDLNTIIC (182 aa)). 7 to 14 (APSGTGKS) contacts ATP.

Belongs to the guanylate kinase family.

Its subcellular location is the cytoplasm. The enzyme catalyses GMP + ATP = GDP + ADP. Essential for recycling GMP and indirectly, cGMP. The polypeptide is Guanylate kinase (Baumannia cicadellinicola subsp. Homalodisca coagulata).